A 507-amino-acid polypeptide reads, in one-letter code: Carnosic acid synthase (507 aa).

The helical transmembrane segment at 6–23 threads the bilayer; it reads VFSLAFLAAWFIVVFPRW. Cys450 lines the heme pocket.

Belongs to the cytochrome P450 family. Heme serves as cofactor. As to expression, expressed in glandular trichomes of young leaves.

The protein localises to the membrane. It carries out the reaction 11-hydroxyferruginol + 3 reduced [NADPH--hemoprotein reductase] + 3 O2 = carnosate + 3 oxidized [NADPH--hemoprotein reductase] + 4 H2O + 4 H(+). The catalysed reaction is miltiradiene + 2 reduced [NADPH--hemoprotein reductase] + 2 O2 = miltiradien-20-al + 2 oxidized [NADPH--hemoprotein reductase] + 3 H2O + 2 H(+). The enzyme catalyses ferruginol + 3 reduced [NADPH--hemoprotein reductase] + 3 O2 = pisiferate + 3 oxidized [NADPH--hemoprotein reductase] + 4 H2O + 4 H(+). The protein operates within secondary metabolite biosynthesis; terpenoid biosynthesis. Functionally, monooxygenase involved in the biosynthesis of carnosate, a potent antioxidant labdane-related diterpene natural product. Catalyzes the oxidation of 11-hydroxyferruginol to produce carnosate. Mediates the conversion of miltiradien into miltiradien-20-al. Also involved in the production of pisiferic acid and derivative products from ferruginol. The protein is Carnosic acid synthase of Rosmarinus officinalis (Rosemary).